The chain runs to 148 residues: Azurin (148 aa).

A signal peptide spans 1 to 20 (MLRKLAAVSLLSLLSAPLLA). One can recognise a Plastocyanin-like domain in the interval 21 to 148 (AECSVDIQGN…ALMKGTLTLK (128 aa)). An intrachain disulfide couples cysteine 23 to cysteine 46. 4 residues coordinate Cu cation: histidine 66, cysteine 132, histidine 137, and methionine 141.

The protein resides in the periplasm. Functionally, transfers electrons from cytochrome c551 to cytochrome oxidase. The protein is Azurin (azu) of Pseudomonas aeruginosa (strain ATCC 15692 / DSM 22644 / CIP 104116 / JCM 14847 / LMG 12228 / 1C / PRS 101 / PAO1).